We begin with the raw amino-acid sequence, 318 residues long: Probable plastid-lipid-associated protein 1, chloroplastic (318 aa).

The N-terminal 55 residues, 1–55 (MATVPLFTQFPCKTLNPSSSNTKHQSKSPILLPINSINRRSEIGVSVHRPDFKIR), are a transit peptide targeting the chloroplast. Residue Thr57 is modified to Phosphothreonine.

This sequence belongs to the PAP/fibrillin family. As to quaternary structure, interacts (via N-terminus) with ABI2. In terms of tissue distribution, expressed in flower buds. Detected in tapetal cells, endothecium and connective in anthers and in subepidermal cells in filaments.

The protein resides in the plastid. The protein localises to the chloroplast. It is found in the plastoglobule. Its subcellular location is the chloroplast thylakoid. Its function is as follows. Probably involved in light/cold stress-related jasmonate (JA) biosynthesis. Contributes to the protection of photosystem II (PSII) against light stress. The chain is Probable plastid-lipid-associated protein 1, chloroplastic (PAP1) from Arabidopsis thaliana (Mouse-ear cress).